The following is a 349-amino-acid chain: tRNA pseudouridine synthase D (349 aa).

Phe-26 serves as a coordination point for substrate. Asp-79 acts as the Nucleophile in catalysis. Asn-128 contacts substrate. The TRUD domain occupies 154 to 302 (GVPNYFGSQR…VEGARRAILL (149 aa)). Position 328 (Phe-328) interacts with substrate.

The protein belongs to the pseudouridine synthase TruD family.

The catalysed reaction is uridine(13) in tRNA = pseudouridine(13) in tRNA. In terms of biological role, responsible for synthesis of pseudouridine from uracil-13 in transfer RNAs. The chain is tRNA pseudouridine synthase D from Yersinia enterocolitica serotype O:8 / biotype 1B (strain NCTC 13174 / 8081).